Consider the following 230-residue polypeptide: LexA repressor (230 aa).

The segment at residues 28–48 (LREIGAHMGIRSTNGVNDHLR) is a DNA-binding region (H-T-H motif). Active-site for autocatalytic cleavage activity residues include serine 149 and lysine 186.

The protein belongs to the peptidase S24 family. Homodimer.

It catalyses the reaction Hydrolysis of Ala-|-Gly bond in repressor LexA.. In terms of biological role, represses a number of genes involved in the response to DNA damage (SOS response), including recA and lexA. In the presence of single-stranded DNA, RecA interacts with LexA causing an autocatalytic cleavage which disrupts the DNA-binding part of LexA, leading to derepression of the SOS regulon and eventually DNA repair. The sequence is that of LexA repressor from Sorangium cellulosum (strain So ce56) (Polyangium cellulosum (strain So ce56)).